Reading from the N-terminus, the 178-residue chain is Crossover junction endodeoxyribonuclease RuvC (178 aa).

Residues Asp-7, Glu-67, and Asp-139 contribute to the active site. Residues Asp-7, Glu-67, and Asp-139 each coordinate Mg(2+).

It belongs to the RuvC family. As to quaternary structure, homodimer which binds Holliday junction (HJ) DNA. The HJ becomes 2-fold symmetrical on binding to RuvC with unstacked arms; it has a different conformation from HJ DNA in complex with RuvA. In the full resolvosome a probable DNA-RuvA(4)-RuvB(12)-RuvC(2) complex forms which resolves the HJ. It depends on Mg(2+) as a cofactor.

It localises to the cytoplasm. It catalyses the reaction Endonucleolytic cleavage at a junction such as a reciprocal single-stranded crossover between two homologous DNA duplexes (Holliday junction).. Functionally, the RuvA-RuvB-RuvC complex processes Holliday junction (HJ) DNA during genetic recombination and DNA repair. Endonuclease that resolves HJ intermediates. Cleaves cruciform DNA by making single-stranded nicks across the HJ at symmetrical positions within the homologous arms, yielding a 5'-phosphate and a 3'-hydroxyl group; requires a central core of homology in the junction. The consensus cleavage sequence is 5'-(A/T)TT(C/G)-3'. Cleavage occurs on the 3'-side of the TT dinucleotide at the point of strand exchange. HJ branch migration catalyzed by RuvA-RuvB allows RuvC to scan DNA until it finds its consensus sequence, where it cleaves and resolves the cruciform DNA. The polypeptide is Crossover junction endodeoxyribonuclease RuvC (Trichlorobacter lovleyi (strain ATCC BAA-1151 / DSM 17278 / SZ) (Geobacter lovleyi)).